The following is a 176-amino-acid chain: Large ribosomal subunit protein uL10 (176 aa).

The protein belongs to the universal ribosomal protein uL10 family. Part of the ribosomal stalk of the 50S ribosomal subunit. The N-terminus interacts with L11 and the large rRNA to form the base of the stalk. The C-terminus forms an elongated spine to which L12 dimers bind in a sequential fashion forming a multimeric L10(L12)X complex.

Its function is as follows. Forms part of the ribosomal stalk, playing a central role in the interaction of the ribosome with GTP-bound translation factors. The polypeptide is Large ribosomal subunit protein uL10 (Acaryochloris marina (strain MBIC 11017)).